The following is a 423-amino-acid chain: Histone deacetylase 14, chloroplastic (423 aa).

The transit peptide at 1–44 (MSMALIVRPFFVPGSAGISGSRNICKKNQWRKYLLKPSGSSINC) directs the protein to the chloroplast. Residues 62-392 (DARLIYSVSA…FRALLGEDSL (331 aa)) are histone deacetylase. The active-site Proton donor/acceptor is the H202. The Zn(2+) site is built by D239, H241, and D326.

This sequence belongs to the histone deacetylase family. As to quaternary structure, interacts with PP2A2. Zn(2+) is required as a cofactor. As to expression, expressed in stems, leaves, flowers, siliques and mature seeds.

Its subcellular location is the nucleus. It is found in the cytoplasm. It localises to the plastid. The protein localises to the chloroplast stroma. The protein resides in the mitochondrion. It carries out the reaction N-acetylserotonin + H2O = serotonin + acetate. The enzyme catalyses N-acetyltyramine + H2O = tyramine + acetate. It catalyses the reaction N-acetyltryptamine + H2O = tryptamine + acetate. The catalysed reaction is melatonin + H2O = 5-methoxytryptamine + acetate. Its activity is regulated as follows. Its activity is inhibited by trichostatin A (TSA), a known histone deacetylase inhibitor. Its function is as follows. Regulates lysine acetylation levels of plastid proteins related to photosynthesis. Involved in the regulation of the activation state of RuBisCO, which is controlled by lysine acetylation of RuBisCO activase under low-light conditions. Associates with alpha- and beta-tubulins and deacetylate alpha-tubulin. Does not seem to be required for the cellular patterning in the root epidermis. Involved in the regulation of melatonin biosynthesis by catalyzing the deacetylation of N-acetylserotonin to produce serotonin. N-acetylserotonin is methylated by acetylserotonin O-methyltransferase (ASMT) to produce melatonin (N-acetyl-5-methoxytryptamine). Deacetylates melatonin to produce 5-methoxytryptamine. In vitro, deacetylates N-acetyltyramine and N-acetyltryptamine to produce tyramine and tryptamine, respectively. In Arabidopsis thaliana (Mouse-ear cress), this protein is Histone deacetylase 14, chloroplastic.